A 311-amino-acid polypeptide reads, in one-letter code: MMNKNSRLYTDSNIRNTFFAEIGIGVSANSLLLLFNIFKLICGQRSRLTDLPIGLLSLINLLMLLMTAFIATDTFISWRGWDDIICKSLLYLYRTFRGLSLCTSCLLSVLQAIILSPRSSCLAKFKHKPSHHISCAILSLSVLYMFISSHLLVSIIATPNLTTNDFIHVTQWCSILPMSYLMQSMFSTLLAIRDVFLISLMVLSTWYMVALLCRHRKQTRHLQGTSLSPKASPEQRATRSILMLMSLFVLMSVFDSIVCSSRTMYLNDPISYSYQLFMVHIYATVSPFVFIVTEKHIVNSLRSMCVKVMNV.

Residues 1 to 17 are Extracellular-facing; the sequence is MMNKNSRLYTDSNIRNT. The chain crosses the membrane as a helical span at residues 18 to 38; sequence FFAEIGIGVSANSLLLLFNIF. Topologically, residues 39–50 are cytoplasmic; sequence KLICGQRSRLTD. Residues 51–71 traverse the membrane as a helical segment; sequence LPIGLLSLINLLMLLMTAFIA. Residues 72–94 are Extracellular-facing; that stretch reads TDTFISWRGWDDIICKSLLYLYR. Cysteine 86 and cysteine 173 are joined by a disulfide. The helical transmembrane segment at 95–115 threads the bilayer; that stretch reads TFRGLSLCTSCLLSVLQAIIL. Over 116 to 135 the chain is Cytoplasmic; it reads SPRSSCLAKFKHKPSHHISC. The helical transmembrane segment at 136 to 156 threads the bilayer; it reads AILSLSVLYMFISSHLLVSII. At 157 to 188 the chain is on the extracellular side; sequence ATPNLTTNDFIHVTQWCSILPMSYLMQSMFST. Asparagine 160 is a glycosylation site (N-linked (GlcNAc...) asparagine). Residues 189–209 form a helical membrane-spanning segment; it reads LLAIRDVFLISLMVLSTWYMV. Topologically, residues 210 to 239 are cytoplasmic; it reads ALLCRHRKQTRHLQGTSLSPKASPEQRATR. A helical membrane pass occupies residues 240–260; that stretch reads SILMLMSLFVLMSVFDSIVCS. At 261 to 271 the chain is on the extracellular side; that stretch reads SRTMYLNDPIS. Residues 272 to 292 traverse the membrane as a helical segment; sequence YSYQLFMVHIYATVSPFVFIV. At 293 to 311 the chain is on the cytoplasmic side; sequence TEKHIVNSLRSMCVKVMNV.

This sequence belongs to the G-protein coupled receptor 1 family. As to expression, expressed in 1-4% of neurons of the vomeronasal organ. Only one pheromone receptor gene may be expressed in a particular neuron. Not expressed in the main olfactory epithelium.

Its subcellular location is the cell membrane. Its function is as follows. Putative pheromone receptor implicated in the regulation of social as well as reproductive behavior. The polypeptide is Vomeronasal type-1 receptor 105 (Vom1r105) (Rattus norvegicus (Rat)).